The primary structure comprises 597 residues: CTP synthase (597 aa).

The tract at residues 1 to 272 (MARPKNVKYV…DMRVLKKLGL (272 aa)) is amidoligase domain. Serine 18 is a binding site for CTP. Position 18 (serine 18) interacts with UTP. Residue 19 to 24 (SLGKGI) participates in ATP binding. An L-glutamine-binding site is contributed by tyrosine 59. Position 76 (aspartate 76) interacts with ATP. 2 residues coordinate Mg(2+): aspartate 76 and glutamate 146. CTP contacts are provided by residues 153–155 (DIE), 193–198 (KTKPTQ), and lysine 229. Residues 193 to 198 (KTKPTQ) and lysine 229 each bind UTP. The 245-residue stretch at 299–543 (NVAICGKYTE…VGAAKAYADG (245 aa)) folds into the Glutamine amidotransferase type-1 domain. Glycine 363 contributes to the L-glutamine binding site. Cysteine 390 (nucleophile; for glutamine hydrolysis) is an active-site residue. Residues 391–394 (LGMQ), glutamate 414, and arginine 471 each bind L-glutamine. Active-site residues include histidine 516 and glutamate 518.

Belongs to the CTP synthase family. Homotetramer.

It carries out the reaction UTP + L-glutamine + ATP + H2O = CTP + L-glutamate + ADP + phosphate + 2 H(+). It catalyses the reaction L-glutamine + H2O = L-glutamate + NH4(+). The enzyme catalyses UTP + NH4(+) + ATP = CTP + ADP + phosphate + 2 H(+). Its pathway is pyrimidine metabolism; CTP biosynthesis via de novo pathway; CTP from UDP: step 2/2. Its activity is regulated as follows. Allosterically activated by GTP, when glutamine is the substrate; GTP has no effect on the reaction when ammonia is the substrate. The allosteric effector GTP functions by stabilizing the protein conformation that binds the tetrahedral intermediate(s) formed during glutamine hydrolysis. Inhibited by the product CTP, via allosteric rather than competitive inhibition. Functionally, catalyzes the ATP-dependent amination of UTP to CTP with either L-glutamine or ammonia as the source of nitrogen. Regulates intracellular CTP levels through interactions with the four ribonucleotide triphosphates. The chain is CTP synthase from Chlorobium luteolum (strain DSM 273 / BCRC 81028 / 2530) (Pelodictyon luteolum).